The chain runs to 876 residues: Valine--tRNA ligase (876 aa).

The 'HIGH' region signature appears at 44-54 (PNVTGKLHLGH). The 'KMSKS' region motif lies at 520–524 (KMSKS). Lys-523 contributes to the ATP binding site. A coiled-coil region spans residues 806–876 (EGLIDMDKEI…VKLRINQLKA (71 aa)).

The protein belongs to the class-I aminoacyl-tRNA synthetase family. ValS type 1 subfamily. Monomer.

It localises to the cytoplasm. It carries out the reaction tRNA(Val) + L-valine + ATP = L-valyl-tRNA(Val) + AMP + diphosphate. Its function is as follows. Catalyzes the attachment of valine to tRNA(Val). As ValRS can inadvertently accommodate and process structurally similar amino acids such as threonine, to avoid such errors, it has a 'posttransfer' editing activity that hydrolyzes mischarged Thr-tRNA(Val) in a tRNA-dependent manner. The protein is Valine--tRNA ligase of Staphylococcus saprophyticus subsp. saprophyticus (strain ATCC 15305 / DSM 20229 / NCIMB 8711 / NCTC 7292 / S-41).